The primary structure comprises 456 residues: Protein translocase subunit SecY (456 aa).

Over 1–21 the chain is Cytoplasmic; it reads MEQLKEKFEPLFSVLPQVKSP. A helical membrane pass occupies residues 22-48; the sequence is GYRVPFREKLKWTGIILVLYFFLAQIP. At 49–59 the chain is on the extracellular side; that stretch reads LYGLSANAVDQ. The helical intramembrane region spans 60 to 67; it reads FAQFRAVL. A discontinuously helical transmembrane segment spans residues 60–88; that stretch reads FAQFRAVLAGNFGSILTLGIGPIVSASII. An intramembrane segment occupies 68–79; it reads AGNFGSILTLGI. Residues 80-88 constitute an intramembrane region (helical); that stretch reads GPIVSASII. Residues 89–109 are Cytoplasmic-facing; the sequence is LQLLVGGKILKLDLSRHEDKA. Residues 110–134 traverse the membrane as a helical segment; that stretch reads FFQGLQKLLAIVFTFFEALIFVLTG. Over 135 to 141 the chain is Extracellular; it reads SLAPSAP. A helical transmembrane segment spans residues 142-166; that stretch reads QFVWVLILQLTIGGILIIFLDEVVS. Residues 167-172 lie on the Cytoplasmic side of the membrane; the sequence is KWGFGS. The chain crosses the membrane as a helical span at residues 173–191; the sequence is GVGLFIAAGVSQEIIVGAF. Residues 192 to 224 lie on the Extracellular side of the membrane; it reads NPLSAPTQPGVPAGRITGFLYLLFTGQSPDFQY. Residues 225–246 form a helical membrane-spanning segment; it reads YVLPVLALIAVFLVVVYAESMR. At 247–275 the chain is on the cytoplasmic side; that stretch reads VEIPISMGGGKRLSRGAVGKYPLRFIYAS. The helical transmembrane segment at 276 to 297 threads the bilayer; the sequence is NMPVILTSALLLNVQLLANVFQ. At 298–334 the chain is on the extracellular side; it reads KLGYPILGTVSNGQAVDGLAYLLTAPRSIDALILDPF. Residues 335 to 354 form a helical membrane-spanning segment; the sequence is RVVFYAVVFIGLCVLFAWLW. The Cytoplasmic portion of the chain corresponds to 355–397; sequence VEISNIGPRHVARQLYQMGMQIPGFRSSRGQFEKILKRYIPTI. The helical transmembrane segment at 398-416 threads the bilayer; it reads TILGGAFVGLLAFVADLTG. Topologically, residues 417–419 are extracellular; that stretch reads SLG. Residues 420 to 434 traverse the membrane as a helical segment; sequence GGTGVLLTVGIVYRL. Residues 435–456 lie on the Cytoplasmic side of the membrane; it reads YEEIAQEQLMDMHPILRSFLGD.

This sequence belongs to the SecY/SEC61-alpha family. As to quaternary structure, component of the Sec protein translocase complex. Heterotrimer consisting of alpha (SecY), beta (SecG) and gamma (SecE) subunits. The heterotrimers can form oligomers, although 1 heterotrimer is thought to be able to translocate proteins. Interacts with the ribosome. May interact with SecDF, and other proteins may be involved.

Its subcellular location is the cell membrane. Its function is as follows. The central subunit of the protein translocation channel SecYEG. Consists of two halves formed by TMs 1-5 and 6-10. These two domains form a lateral gate at the front which open onto the bilayer between TMs 2 and 7, and are clamped together by SecE at the back. The channel is closed by both a pore ring composed of hydrophobic SecY resides and a short helix (helix 2A) on the extracellular side of the membrane which forms a plug. The plug probably moves laterally to allow the channel to open. The ring and the pore may move independently. The polypeptide is Protein translocase subunit SecY (Methanothermobacter thermautotrophicus (strain ATCC 29096 / DSM 1053 / JCM 10044 / NBRC 100330 / Delta H) (Methanobacterium thermoautotrophicum)).